Here is a 266-residue protein sequence, read N- to C-terminus: Adaptin ear-binding coat-associated protein 2 (266 aa).

Disordered stretches follow at residues 165-198 (MRKK…KSST) and 245-266 (DFTK…WVQF). Position 181 is a phosphoserine (Ser181). Short sequence motifs (WXXF motif) lie at residues 243 to 246 (WGDF) and 263 to 266 (WVQF). Low complexity predominate over residues 249-266 (STGSPSSQSQPGTGWVQF).

This sequence belongs to the NECAP family. In terms of assembly, interacts with AP1G1 and AP2A1 components of the adapter protein complexes AP-1 and AP-2. Interacts with the GAE domain proteins GGA1, GGA2 and GGA3. As to expression, expressed in brain, heart, kidney, liver, lung, skeletal muscles and testis (at protein level).

It localises to the cytoplasmic vesicle. Its subcellular location is the clathrin-coated vesicle membrane. The protein resides in the cell membrane. Functionally, involved in endocytosis. The protein is Adaptin ear-binding coat-associated protein 2 (Necap2) of Mus musculus (Mouse).